The following is a 436-amino-acid chain: Protein translocase subunit SecY (436 aa).

10 helical membrane passes run 18 to 38 (IAFTLGLIAVYRMGDFVPATG), 69 to 89 (LLQVSVFALGIMPYITASIIV), 116 to 138 (YTRYLTLALALLQATTMASLART), 154 to 174 (ILTVLLVVIALTTGCLIVMWF), 187 to 207 (MSLLIFTSIAAGFPAGLGQVV), 214 to 234 (VFAIVMGIGLLTMLAIVFVEE), 266 to 286 (MANVIPVIFASSVLMLPGILI), 314 to 334 (PVYMALYFLLIIGFTYFYVSI), 375 to 395 (VVGALYLGIVAMIPLIAFAVI), and 396 to 416 (GTSQNFPLGGTSILIMVGVGL).

It belongs to the SecY/SEC61-alpha family. Component of the Sec protein translocase complex. Heterotrimer consisting of SecY, SecE and SecG subunits. The heterotrimers can form oligomers, although 1 heterotrimer is thought to be able to translocate proteins. Interacts with the ribosome. Interacts with SecDF, and other proteins may be involved. Interacts with SecA.

It localises to the cell membrane. Functionally, the central subunit of the protein translocation channel SecYEG. Consists of two halves formed by TMs 1-5 and 6-10. These two domains form a lateral gate at the front which open onto the bilayer between TMs 2 and 7, and are clamped together by SecE at the back. The channel is closed by both a pore ring composed of hydrophobic SecY resides and a short helix (helix 2A) on the extracellular side of the membrane which forms a plug. The plug probably moves laterally to allow the channel to open. The ring and the pore may move independently. This Micrococcus luteus (Micrococcus lysodeikticus) protein is Protein translocase subunit SecY.